A 126-amino-acid chain; its full sequence is Prefoldin subunit beta (126 aa).

This sequence belongs to the prefoldin subunit beta family. In terms of assembly, heterohexamer of two alpha and four beta subunits.

It localises to the cytoplasm. Functionally, molecular chaperone capable of stabilizing a range of proteins. Seems to fulfill an ATP-independent, HSP70-like function in archaeal de novo protein folding. The chain is Prefoldin subunit beta (pfdB) from Pyrobaculum aerophilum (strain ATCC 51768 / DSM 7523 / JCM 9630 / CIP 104966 / NBRC 100827 / IM2).